A 408-amino-acid chain; its full sequence is Aminomethyltransferase, mitochondrial (408 aa).

The transit peptide at 1-30 (MRGGGLWQLGQSVTRRLAQAEKKVIARRCF) directs the protein to the mitochondrion. Substrate is bound by residues E235, R266, and Y404.

The protein belongs to the GcvT family. In terms of assembly, the glycine cleavage system is composed of four proteins: P, T, L and H.

The protein resides in the mitochondrion. The catalysed reaction is N(6)-[(R)-S(8)-aminomethyldihydrolipoyl]-L-lysyl-[protein] + (6S)-5,6,7,8-tetrahydrofolate = N(6)-[(R)-dihydrolipoyl]-L-lysyl-[protein] + (6R)-5,10-methylene-5,6,7,8-tetrahydrofolate + NH4(+). In terms of biological role, the glycine cleavage system catalyzes the degradation of glycine. The sequence is that of Aminomethyltransferase, mitochondrial (GDCST) from Mesembryanthemum crystallinum (Common ice plant).